Consider the following 361-residue polypeptide: 3-dehydroquinate synthase (361 aa).

NAD(+)-binding positions include 70-75, 104-108, 128-129, lysine 141, and lysine 150; these read DGEQHK, GVVGD, and TT. Zn(2+)-binding residues include glutamate 183, histidine 246, and histidine 263.

This sequence belongs to the sugar phosphate cyclases superfamily. Dehydroquinate synthase family. It depends on Co(2+) as a cofactor. Zn(2+) serves as cofactor. Requires NAD(+) as cofactor.

The protein resides in the cytoplasm. It carries out the reaction 7-phospho-2-dehydro-3-deoxy-D-arabino-heptonate = 3-dehydroquinate + phosphate. Its pathway is metabolic intermediate biosynthesis; chorismate biosynthesis; chorismate from D-erythrose 4-phosphate and phosphoenolpyruvate: step 2/7. Its function is as follows. Catalyzes the conversion of 3-deoxy-D-arabino-heptulosonate 7-phosphate (DAHP) to dehydroquinate (DHQ). The protein is 3-dehydroquinate synthase of Teredinibacter turnerae (strain ATCC 39867 / T7901).